We begin with the raw amino-acid sequence, 171 residues long: Neudesin (171 aa).

An N-terminal signal peptide occupies residues 1-30; that stretch reads MARPAPWWRLRLLAALVLALALVPVPSAWA. In terms of domain architecture, Cytochrome b5 heme-binding spans 43 to 128; the sequence is VRLFTEEELA…KELEALDDVF (86 aa). An N6-acetyllysine modification is found at Lys-135.

It belongs to the cytochrome b5 family. MAPR subfamily. Interacts with PINK1 and PARK7. In terms of tissue distribution, in the embryo, expressed most abundantly in brain and spinal cord. Widely expressed in adult tissues including brain, heart, lung and kidney. In brain, expressed in neurons but not in glial cells. In the hypothalamus is expressed primarily in the paraventricular nucleus (PVN), with lower levels of expression in the arcuate nucleus (ARC).

It is found in the secreted. The protein localises to the extracellular space. It localises to the mitochondrion. Its subcellular location is the endoplasmic reticulum. Functionally, acts as a neurotrophic factor in postnatal mature neurons, enhancing neuronal survival. Promotes cell proliferation and neurogenesis in undifferentiated neural pro-genitor cells at the embryonic stage and inhibits differentiation of astrocytes. Its neurotrophic activity is exerted via MAPK1/ERK2, MAPK3/ERK1 and AKT1/AKT pathways. Neurotrophic activity is enhanced by binding to heme. Also acts as an anorexigenic neurotrophic factor that contributes to energy balance. The polypeptide is Neudesin (Mus musculus (Mouse)).